Here is a 111-residue protein sequence, read N- to C-terminus: Nucleoid-associated protein Cag_1190 (111 aa).

It belongs to the YbaB/EbfC family. In terms of assembly, homodimer.

Its subcellular location is the cytoplasm. The protein localises to the nucleoid. Functionally, binds to DNA and alters its conformation. May be involved in regulation of gene expression, nucleoid organization and DNA protection. The polypeptide is Nucleoid-associated protein Cag_1190 (Chlorobium chlorochromatii (strain CaD3)).